Here is a 249-residue protein sequence, read N- to C-terminus: Ribosomal RNA small subunit methyltransferase J (249 aa).

Residues 101–102, 117–118, 153–154, and D171 contribute to the S-adenosyl-L-methionine site; these read RD, ER, and SS.

Belongs to the methyltransferase superfamily. RsmJ family.

It is found in the cytoplasm. The enzyme catalyses guanosine(1516) in 16S rRNA + S-adenosyl-L-methionine = N(2)-methylguanosine(1516) in 16S rRNA + S-adenosyl-L-homocysteine + H(+). Specifically methylates the guanosine in position 1516 of 16S rRNA. The polypeptide is Ribosomal RNA small subunit methyltransferase J (Salmonella arizonae (strain ATCC BAA-731 / CDC346-86 / RSK2980)).